Reading from the N-terminus, the 201-residue chain is LexA repressor 1 (201 aa).

The H-T-H motif DNA-binding region spans 27–47 (LAEIAQAFGFASRNAAQKHVQ). Active-site for autocatalytic cleavage activity residues include Ser122 and Lys159.

The protein belongs to the peptidase S24 family. As to quaternary structure, homodimer.

The catalysed reaction is Hydrolysis of Ala-|-Gly bond in repressor LexA.. Functionally, represses a number of genes involved in the response to DNA damage (SOS response), including recA and lexA. In the presence of single-stranded DNA, RecA interacts with LexA causing an autocatalytic cleavage which disrupts the DNA-binding part of LexA, leading to derepression of the SOS regulon and eventually DNA repair. The polypeptide is LexA repressor 1 (Xanthomonas campestris pv. campestris (strain ATCC 33913 / DSM 3586 / NCPPB 528 / LMG 568 / P 25)).